A 344-amino-acid chain; its full sequence is Phosphoribosylformylglycinamidine cyclo-ligase (344 aa).

Belongs to the AIR synthase family.

The protein localises to the cytoplasm. It carries out the reaction 2-formamido-N(1)-(5-O-phospho-beta-D-ribosyl)acetamidine + ATP = 5-amino-1-(5-phospho-beta-D-ribosyl)imidazole + ADP + phosphate + H(+). The protein operates within purine metabolism; IMP biosynthesis via de novo pathway; 5-amino-1-(5-phospho-D-ribosyl)imidazole from N(2)-formyl-N(1)-(5-phospho-D-ribosyl)glycinamide: step 2/2. The sequence is that of Phosphoribosylformylglycinamidine cyclo-ligase from Haemophilus influenzae (strain 86-028NP).